We begin with the raw amino-acid sequence, 608 residues long: Tyrosyl-DNA phosphodiesterase 1 (608 aa).

The interval 1-101 (MSQEGDYGRW…SDDELQPEMP (101 aa)) is disordered. S61 bears the Phosphoserine mark. The residue at position 147 (T147) is a Phosphothreonine. Residue S148 is modified to Phosphoserine. H263 serves as the catalytic Nucleophile. K265 is a binding site for substrate. The interval 400-403 (SVGS) is interaction with DNA. H493 (proton donor/acceptor) is an active-site residue. K495 is a substrate binding site.

This sequence belongs to the tyrosyl-DNA phosphodiesterase family. Monomer. In terms of processing, phosphorylated on serine and/or threonine residues, but not on tyrosine residues. Ubiquitously expressed. Similar expression throughout the central nervous system (whole brain, amygdala, caudate nucleus, cerebellum, cerebral cortex, frontal lobe, hippocampus, medulla oblongata, occipital lobe, putamen, substantia nigra, temporal lobe, thalamus, nucleus accumbens and spinal cord) and increased expression in testis and thymus.

The protein resides in the nucleus. Its subcellular location is the cytoplasm. In terms of biological role, DNA repair enzyme that can remove a variety of covalent adducts from DNA through hydrolysis of a 3'-phosphodiester bond, giving rise to DNA with a free 3' phosphate. Catalyzes the hydrolysis of dead-end complexes between DNA and the topoisomerase I active site tyrosine residue. Hydrolyzes 3'-phosphoglycolates on protruding 3' ends on DNA double-strand breaks due to DNA damage by radiation and free radicals. Acts on blunt-ended double-strand DNA breaks and on single-stranded DNA. Has low 3'exonuclease activity and can remove a single nucleoside from the 3'end of DNA and RNA molecules with 3'hydroxyl groups. Has no exonuclease activity towards DNA or RNA with a 3'phosphate. This Homo sapiens (Human) protein is Tyrosyl-DNA phosphodiesterase 1 (TDP1).